The primary structure comprises 917 residues: Catenin alpha (917 aa).

Residues Thr643 and Thr645 each carry the phosphothreonine modification. Residues Ser659 and Ser662 each carry the phosphoserine modification. The segment covering 878 to 890 (PLVRPEKPEEVRA) has biased composition (basic and acidic residues). Residues 878 to 905 (PLVRPEKPEEVRAKVRKGSQKKVQNPIH) are disordered.

Belongs to the vinculin/alpha-catenin family. In terms of assembly, interacts with arm/armadillo protein. Rapidly phosphorylated by CK2 and more slowly by CK1.

It localises to the cytoplasm. The protein localises to the cytoskeleton. Its subcellular location is the cell junction. The protein resides in the adherens junction. It is found in the cell membrane. In terms of biological role, associates with the cytoplasmic domain of a variety of cadherins. The association of catenins to cadherins produces a complex which is linked to the actin filament network, and which seems to be of primary importance for cadherins cell-adhesion properties. The sequence is that of Catenin alpha from Drosophila melanogaster (Fruit fly).